The following is a 76-amino-acid chain: Small ribosomal subunit protein bS18 (76 aa).

Belongs to the bacterial ribosomal protein bS18 family. Part of the 30S ribosomal subunit. Forms a tight heterodimer with protein bS6.

Binds as a heterodimer with protein bS6 to the central domain of the 16S rRNA, where it helps stabilize the platform of the 30S subunit. This is Small ribosomal subunit protein bS18 from Brevibacillus brevis (strain 47 / JCM 6285 / NBRC 100599).